The chain runs to 124 residues: Protein TAR1 (124 aa).

Positions 80-124 are disordered; it reads KNRTPRHTGFSPSMTSCSKEHRQGTAPKLPSPNYNSGTEGTRFQI. A compositionally biased stretch (polar residues) spans 111–124; the sequence is PNYNSGTEGTRFQI.

It is found in the mitochondrion. May be involved in mtDNA stability or mitochondrial gene expression regulation at the post-transcriptional level. This is Protein TAR1 (TAR1) from Saccharomyces cerevisiae (strain ATCC 204508 / S288c) (Baker's yeast).